The primary structure comprises 320 residues: Ferrochelatase (320 aa).

Residues His194 and Glu275 each coordinate Fe cation.

Belongs to the ferrochelatase family.

It is found in the cytoplasm. The catalysed reaction is heme b + 2 H(+) = protoporphyrin IX + Fe(2+). It participates in porphyrin-containing compound metabolism; protoheme biosynthesis; protoheme from protoporphyrin-IX: step 1/1. Functionally, catalyzes the ferrous insertion into protoporphyrin IX. The protein is Ferrochelatase of Stenotrophomonas maltophilia (strain R551-3).